The sequence spans 288 residues: Chemotaxis protein methyltransferase 2 (288 aa).

One can recognise a CheR-type methyltransferase domain in the interval 1 to 280 (MNEIVITDTD…TGYYKPHKGK (280 aa)). S-adenosyl-L-methionine-binding positions include asparagine 76, threonine 78, arginine 82, glutamate 119, aspartate 145, 200-201 (NL), and 219-220 (RN).

It catalyses the reaction L-glutamyl-[protein] + S-adenosyl-L-methionine = [protein]-L-glutamate 5-O-methyl ester + S-adenosyl-L-homocysteine. Functionally, methylation of the membrane-bound methyl-accepting chemotaxis proteins (MCP) to form gamma-glutamyl methyl ester residues in MCP. The chain is Chemotaxis protein methyltransferase 2 (cheR2) from Vibrio cholerae serotype O1 (strain ATCC 39315 / El Tor Inaba N16961).